The primary structure comprises 256 residues: Glutamate racemase (256 aa).

Substrate-binding positions include 11-12 and 43-44; these read DS and YG. Cysteine 74 functions as the Proton donor/acceptor in the catalytic mechanism. 75-76 lines the substrate pocket; that stretch reads NT. The Proton donor/acceptor role is filled by cysteine 182. 183–184 provides a ligand contact to substrate; sequence TH.

The protein belongs to the aspartate/glutamate racemases family.

The enzyme catalyses L-glutamate = D-glutamate. It functions in the pathway cell wall biogenesis; peptidoglycan biosynthesis. Provides the (R)-glutamate required for cell wall biosynthesis. The protein is Glutamate racemase of Leptospira interrogans serogroup Icterohaemorrhagiae serovar Lai (strain 56601).